The sequence spans 422 residues: Probable protein phosphatase 2C 43 (422 aa).

The PPM-type phosphatase domain maps to 117-393 (SSGSYADKGD…DNVTVVVICF (277 aa)). Mn(2+) contacts are provided by D163, G164, D341, and D384.

It belongs to the PP2C family. The cofactor is Mg(2+). Mn(2+) is required as a cofactor.

It carries out the reaction O-phospho-L-seryl-[protein] + H2O = L-seryl-[protein] + phosphate. It catalyses the reaction O-phospho-L-threonyl-[protein] + H2O = L-threonyl-[protein] + phosphate. This chain is Probable protein phosphatase 2C 43, found in Arabidopsis thaliana (Mouse-ear cress).